A 270-amino-acid polypeptide reads, in one-letter code: Diaminopimelate epimerase (270 aa).

Asn-15, Gln-49, and Asn-66 together coordinate substrate. Cys-75 serves as the catalytic Proton donor. Residues 76–77 (GN), Asn-155, Asn-187, and 204–205 (ER) each bind substrate. Residue Cys-213 is the Proton acceptor of the active site. 214-215 (GS) provides a ligand contact to substrate.

Belongs to the diaminopimelate epimerase family. Homodimer.

The protein localises to the cytoplasm. It catalyses the reaction (2S,6S)-2,6-diaminopimelate = meso-2,6-diaminopimelate. It participates in amino-acid biosynthesis; L-lysine biosynthesis via DAP pathway; DL-2,6-diaminopimelate from LL-2,6-diaminopimelate: step 1/1. Its function is as follows. Catalyzes the stereoinversion of LL-2,6-diaminopimelate (L,L-DAP) to meso-diaminopimelate (meso-DAP), a precursor of L-lysine and an essential component of the bacterial peptidoglycan. The protein is Diaminopimelate epimerase of Rickettsia prowazekii (strain Madrid E).